A 757-amino-acid chain; its full sequence is MSLLFSRCNSIVTVKKDKRHMAEVNASPLKHFVTAKKKINGIFEQLGAYIQESAGFLEDTHRNTELDPVTTEEQVLDVKGYLSKVRGISEVLARRHMKVAFFGRTSNGKSTVINAMLWDKVLPSGIGHTTNCFLRVGGTDGHEAFLLTEGSEEKKSVKTVNQLAHALHQDEQLHAGSLVSVMWPNSKCPLLKDGLVLMDSPGIDVTTELDSWIDKFCLDADVFVLVANSESTLMQTEKQFFHKVSERLSRPNIFILNNRWDASASEPEYMEEVRRQHMERCTSFLVDELGVVDRAQAGDRIFFVSAKEVLSARVQKAQGMPEGGGALAEGFQVRMFEFQNFERRFEECISQSAVKTKFEQHTVRAKQIAEAVRLIMDSLHIAAQEQRVYCLEMREERQDRLRFIDKQLELLAQDYKLRIKQMTEEVERQVSTAMAEEIRRLSVLVDEYQMDFHPSPVVLKVYKNELHRHIEEGLGRNMSDRCSTAIASSLQTMQQDMIDGLKPLLPVSVRNQIDMLVPRQCFSLSYDLNCDKLCADFQEDIEFHFSLGWTMLVNRFLGPKNSRRALLGYNDQVQRPLPLTPANPSMPPLPQGSLTQEELMVSMVTGLASLTSRTSMGILVVGGVVWKAVGWRLIALSFGLYGLLYVYERLTWTTRAKERAFKRQFVEYASEKLQLIISYTGSNCSHQVQQELSGTFAHLCQQVDITRDNLEQEIAAMNKKVEALDSLQSKAKLLRNKAGWLDSELNMFIHQYLQPSR.

Over 1–604 (MSLLFSRCNS…TQEELMVSMV (604 aa)) the chain is Cytoplasmic. The tract at residues 30–94 (KHFVTAKKKI…VRGISEVLAR (65 aa)) is part of a helix bundle domain, formed by helices from N-terminal and C-terminal regions. The region spanning 93–342 (ARRHMKVAFF…VRMFEFQNFE (250 aa)) is the Dynamin-type G domain. Residues 103-110 (GRTSNGKS) are G1 motif. 106–111 (SNGKST) lines the GTP pocket. Thr111 bears the Phosphothreonine; by PINK1 mark. The G2 motif stretch occupies residues 129-130 (TT). Residues 199–202 (DSPG) form a G3 motif region. 258-261 (NRWD) lines the GTP pocket. The segment at 258 to 261 (NRWD) is G4 motif. A region of interest (G5 motif) is located at residue Glu288. GTP is bound by residues Ser305 and Lys307. The segment at 359 to 385 (EQHTVRAKQIAEAVRLIMDSLHIAAQE) is part of a helix bundle domain, formed by helices from N-terminal and C-terminal regions. Residues 406-435 (KQLELLAQDYKLRIKQMTEEVERQVSTAMA) adopt a coiled-coil conformation. Ser442 is subject to Phosphoserine; by PINK1. Residues 605 to 625 (TGLASLTSRTSMGILVVGGVV) form a helical membrane-spanning segment. Residue Trp626 is a topological domain, mitochondrial intermembrane. Residues 627 to 647 (KAVGWRLIALSFGLYGLLYVY) form a helical membrane-spanning segment. Residues 648-757 (ERLTWTTRAK…FIHQYLQPSR (110 aa)) are Cytoplasmic-facing. Residues 696–738 (FAHLCQQVDITRDNLEQEIAAMNKKVEALDSLQSKAKLLRNKA) are a coiled coil. Residues 722 to 753 (EALDSLQSKAKLLRNKAGWLDSELNMFIHQYL) form a part of a helix bundle domain, formed by helices from N-terminal and C-terminal regions region.

The protein belongs to the TRAFAC class dynamin-like GTPase superfamily. Dynamin/Fzo/YdjA family. Mitofusin subfamily. Forms homomultimers and heteromultimers with MFN1. Oligomerization is essential for mitochondrion fusion. Interacts with VAT1. Interacts with STOML2; may form heterooligomers. Interacts (phosphorylated) with PRKN. Interacts with EIF2AK3. Interacts with THG1L; THG1L probably functions as a guanyl-nucleotide exchange factor/GEF, activating MFN2. Phosphorylated by PINK1. Post-translationally, ubiquitinated by non-degradative ubiquitin by PRKN, promoting mitochondrial fusion; deubiquitination by USP30 inhibits mitochondrial fusion. Ubiquitinated by HUWE1 when dietary stearate (C18:0) levels are low; ubiquitination inhibits mitochondrial fusion. Ubiquitous. In brain, it is more expressed than MFN1, while it is expressed at a weaker level than MFN1 in heart and testis. Expressed at high level in elongating spermatids of seminiferous tubules. Expression is markedly down-regulated in highly proliferative vascular smooth muscle cells (VSMCs) from the genetic hypertensive animal model SHR, as well as in balloon-injured Wistar Kyoto arteries.

It is found in the mitochondrion outer membrane. The enzyme catalyses GTP + H2O = GDP + phosphate + H(+). Its function is as follows. Mitochondrial outer membrane GTPase that mediates mitochondrial clustering and fusion. Mitochondria are highly dynamic organelles, and their morphology is determined by the equilibrium between mitochondrial fusion and fission events. Overexpression induces the formation of mitochondrial networks. Membrane clustering requires GTPase activity and may involve a major rearrangement of the coiled coil domains. Plays a central role in mitochondrial metabolism and may be associated with obesity and/or apoptosis processes. Plays an important role in the regulation of vascular smooth muscle cell proliferation. Involved in the clearance of damaged mitochondria via selective autophagy (mitophagy). Is required for PRKN recruitment to dysfunctional mitochondria. Involved in the control of unfolded protein response (UPR) upon ER stress including activation of apoptosis and autophagy during ER stress. Acts as an upstream regulator of EIF2AK3 and suppresses EIF2AK3 activation under basal conditions. The chain is Mitofusin-2 (Mfn2) from Rattus norvegicus (Rat).